The sequence spans 486 residues: Probable glycine dehydrogenase (decarboxylating) subunit 2 (486 aa).

The residue at position 269 (Lys269) is an N6-(pyridoxal phosphate)lysine.

The protein belongs to the GcvP family. C-terminal subunit subfamily. The glycine cleavage system is composed of four proteins: P, T, L and H. In this organism, the P 'protein' is a heterodimer of two subunits. The cofactor is pyridoxal 5'-phosphate.

The catalysed reaction is N(6)-[(R)-lipoyl]-L-lysyl-[glycine-cleavage complex H protein] + glycine + H(+) = N(6)-[(R)-S(8)-aminomethyldihydrolipoyl]-L-lysyl-[glycine-cleavage complex H protein] + CO2. The glycine cleavage system catalyzes the degradation of glycine. The P protein binds the alpha-amino group of glycine through its pyridoxal phosphate cofactor; CO(2) is released and the remaining methylamine moiety is then transferred to the lipoamide cofactor of the H protein. The protein is Probable glycine dehydrogenase (decarboxylating) subunit 2 of Chlorobium phaeobacteroides (strain DSM 266 / SMG 266 / 2430).